The primary structure comprises 449 residues: Bifunctional protein GlmU (449 aa).

The segment at 1-229 (MNHFAVILAA…FEETIGVNDR (229 aa)) is pyrophosphorylase. UDP-N-acetyl-alpha-D-glucosamine contacts are provided by residues 8–11 (LAAG), K22, Q72, and 77–78 (GT). D102 contributes to the Mg(2+) binding site. UDP-N-acetyl-alpha-D-glucosamine is bound by residues G139, E154, N169, and N227. N227 contributes to the Mg(2+) binding site. The interval 230–250 (VALAQAETSMRKRTNEHWMRQ) is linker. An N-acetyltransferase region spans residues 251 to 449 (GVTFIDPAST…ERQTTKPDYR (199 aa)). UDP-N-acetyl-alpha-D-glucosamine-binding residues include R332 and K350. H362 (proton acceptor) is an active-site residue. UDP-N-acetyl-alpha-D-glucosamine-binding residues include Y365 and N376. Residues 385–386 (NY), A422, and R439 each bind acetyl-CoA.

In the N-terminal section; belongs to the N-acetylglucosamine-1-phosphate uridyltransferase family. It in the C-terminal section; belongs to the transferase hexapeptide repeat family. Homotrimer. The cofactor is Mg(2+).

The protein localises to the cytoplasm. The catalysed reaction is alpha-D-glucosamine 1-phosphate + acetyl-CoA = N-acetyl-alpha-D-glucosamine 1-phosphate + CoA + H(+). It carries out the reaction N-acetyl-alpha-D-glucosamine 1-phosphate + UTP + H(+) = UDP-N-acetyl-alpha-D-glucosamine + diphosphate. Its pathway is nucleotide-sugar biosynthesis; UDP-N-acetyl-alpha-D-glucosamine biosynthesis; N-acetyl-alpha-D-glucosamine 1-phosphate from alpha-D-glucosamine 6-phosphate (route II): step 2/2. The protein operates within nucleotide-sugar biosynthesis; UDP-N-acetyl-alpha-D-glucosamine biosynthesis; UDP-N-acetyl-alpha-D-glucosamine from N-acetyl-alpha-D-glucosamine 1-phosphate: step 1/1. It functions in the pathway bacterial outer membrane biogenesis; LPS lipid A biosynthesis. Its function is as follows. Catalyzes the last two sequential reactions in the de novo biosynthetic pathway for UDP-N-acetylglucosamine (UDP-GlcNAc). The C-terminal domain catalyzes the transfer of acetyl group from acetyl coenzyme A to glucosamine-1-phosphate (GlcN-1-P) to produce N-acetylglucosamine-1-phosphate (GlcNAc-1-P), which is converted into UDP-GlcNAc by the transfer of uridine 5-monophosphate (from uridine 5-triphosphate), a reaction catalyzed by the N-terminal domain. This is Bifunctional protein GlmU from Exiguobacterium sibiricum (strain DSM 17290 / CCUG 55495 / CIP 109462 / JCM 13490 / 255-15).